A 433-amino-acid polypeptide reads, in one-letter code: Serine hydroxymethyltransferase (433 aa).

121–123 (AHV) is a (6S)-5,6,7,8-tetrahydrofolate binding site. Lys-227 is modified (N6-(pyridoxal phosphate)lysine). Glu-243 contacts (6S)-5,6,7,8-tetrahydrofolate.

The protein belongs to the SHMT family. In terms of assembly, homodimer. Pyridoxal 5'-phosphate serves as cofactor.

It is found in the cytoplasm. It participates in amino-acid biosynthesis; glycine biosynthesis; glycine from L-serine: step 1/1. Functionally, catalyzes the reversible interconversion of serine and glycine with a modified folate serving as the one-carbon carrier. Also exhibits a pteridine-independent aldolase activity toward beta-hydroxyamino acids, producing glycine and aldehydes, via a retro-aldol mechanism. In Saccharolobus islandicus (strain M.14.25 / Kamchatka #1) (Sulfolobus islandicus), this protein is Serine hydroxymethyltransferase.